The primary structure comprises 425 residues: MREPDFLNHFLKKGYFKKHAKAVLALSGGLDSMFLFKVLSTYQKELEIELILAHVNHKQRIESDWEEKELRKLAAEAELPIYISNFSGEFSEARARNFRYDFFQEVMKKTGATALVTAHHADDQVETILMRLIRGTRLRYLSGIKEKQVVGEIEIIRPFLHFQKKDFPSIFHFEDTSNQENHYFRNRIRNSYLPELEKENPRFRDAILGIGNEILDYDLAIAELSNNINVEDLQQLFSYSESTQRVLLQTYLNRFPDLNLTKAQFAEVQQILKSKSQYRHPIKNGYELIKEYQQFQICKISPQADEEEDEFVLHYQNQVAYQGYLFSFGLPLEGESIQQIPVSRETSIHIRHRKTGDVLIQNGHRKKLRRLFIDLKIPMEKRNSALIIEQFGEIVSILGIATNNLSKKTKNDIMNTVLYIEKIDR.

Residue 27-32 participates in ATP binding; it reads SGGLDS.

It belongs to the tRNA(Ile)-lysidine synthase family.

The protein resides in the cytoplasm. It catalyses the reaction cytidine(34) in tRNA(Ile2) + L-lysine + ATP = lysidine(34) in tRNA(Ile2) + AMP + diphosphate + H(+). Functionally, ligates lysine onto the cytidine present at position 34 of the AUA codon-specific tRNA(Ile) that contains the anticodon CAU, in an ATP-dependent manner. Cytidine is converted to lysidine, thus changing the amino acid specificity of the tRNA from methionine to isoleucine. The sequence is that of tRNA(Ile)-lysidine synthase from Streptococcus pneumoniae (strain Hungary19A-6).